Reading from the N-terminus, the 526-residue chain is 1,4-beta-D-glucan cellobiohydrolase B (526 aa).

Positions 1-23 (MASSFQLYKALLFFSSLLSAVQA) are cleaved as a signal peptide. Residues 24-458 (QKVGTQQAEV…SNIKFGPIGS (435 aa)) form a catalytic region. Glu235 serves as the catalytic Nucleophile. The active-site Proton donor is Glu240. N-linked (GlcNAc...) asparagine glycans are attached at residues Asn293 and Asn400. The interval 459 to 490 (TFGNGGGSGPTTTVTTSTATSTTSSATSTATG) is ser/Thr-rich linker. A disordered region spans residues 464-488 (GGSGPTTTVTTSTATSTTSSATSTA). A compositionally biased stretch (low complexity) spans 468 to 488 (PTTTVTTSTATSTTSSATSTA). In terms of domain architecture, CBM1 spans 490 to 526 (GQAQHWEQCGGNGWTGPTVCASPWACTVVNSWYSQCL). 2 disulfides stabilise this stretch: Cys498/Cys515 and Cys509/Cys525.

The protein belongs to the glycosyl hydrolase 7 (cellulase C) family.

Its subcellular location is the secreted. The catalysed reaction is Hydrolysis of (1-&gt;4)-beta-D-glucosidic linkages in cellulose and cellotetraose, releasing cellobiose from the non-reducing ends of the chains.. Its function is as follows. The biological conversion of cellulose to glucose generally requires three types of hydrolytic enzymes: (1) Endoglucanases which cut internal beta-1,4-glucosidic bonds; (2) Exocellobiohydrolases that cut the disaccharide cellobiose from the non-reducing end of the cellulose polymer chain; (3) Beta-1,4-glucosidases which hydrolyze the cellobiose and other short cello-oligosaccharides to glucose. The chain is 1,4-beta-D-glucan cellobiohydrolase B (cbhB) from Emericella nidulans (strain FGSC A4 / ATCC 38163 / CBS 112.46 / NRRL 194 / M139) (Aspergillus nidulans).